A 397-amino-acid chain; its full sequence is 1-deoxy-D-xylulose 5-phosphate reductoisomerase (397 aa).

NADPH-binding residues include Thr-10, Gly-11, Ser-12, Ile-13, Gly-36, Asn-38, and Asn-124. Position 125 (Lys-125) interacts with 1-deoxy-D-xylulose 5-phosphate. An NADPH-binding site is contributed by Glu-126. Asp-150 contacts Mn(2+). 1-deoxy-D-xylulose 5-phosphate contacts are provided by Ser-151, Glu-152, Ser-186, and His-209. Position 152 (Glu-152) interacts with Mn(2+). Gly-215 contacts NADPH. 1-deoxy-D-xylulose 5-phosphate-binding residues include Ser-222, Asn-227, Lys-228, and Glu-231. Position 231 (Glu-231) interacts with Mn(2+).

It belongs to the DXR family. The cofactor is Mg(2+). Mn(2+) serves as cofactor.

It carries out the reaction 2-C-methyl-D-erythritol 4-phosphate + NADP(+) = 1-deoxy-D-xylulose 5-phosphate + NADPH + H(+). Its pathway is isoprenoid biosynthesis; isopentenyl diphosphate biosynthesis via DXP pathway; isopentenyl diphosphate from 1-deoxy-D-xylulose 5-phosphate: step 1/6. Its function is as follows. Catalyzes the NADPH-dependent rearrangement and reduction of 1-deoxy-D-xylulose-5-phosphate (DXP) to 2-C-methyl-D-erythritol 4-phosphate (MEP). The protein is 1-deoxy-D-xylulose 5-phosphate reductoisomerase of Photobacterium profundum (strain SS9).